The sequence spans 274 residues: Rhamnulose-1-phosphate aldolase (274 aa).

Glu117 is an active-site residue. Residues His141, His143, and His212 each contribute to the Zn(2+) site.

The protein belongs to the aldolase class II family. RhaD subfamily. Homotetramer. Zn(2+) is required as a cofactor.

It is found in the cytoplasm. The enzyme catalyses L-rhamnulose 1-phosphate = (S)-lactaldehyde + dihydroxyacetone phosphate. Its pathway is carbohydrate degradation; L-rhamnose degradation; glycerone phosphate from L-rhamnose: step 3/3. Its function is as follows. Catalyzes the reversible cleavage of L-rhamnulose-1-phosphate to dihydroxyacetone phosphate (DHAP) and L-lactaldehyde. In Escherichia coli O6:H1 (strain CFT073 / ATCC 700928 / UPEC), this protein is Rhamnulose-1-phosphate aldolase.